The primary structure comprises 824 residues: Lon protease (824 aa).

The segment at M1–E23 is disordered. Over residues D10–E20 the composition is skewed to acidic residues. One can recognise a Lon N-terminal domain in the interval L26–L222. Residue G375–T382 participates in ATP binding. The Lon proteolytic domain maps to Q617 to R798. Catalysis depends on residues S704 and K747. The segment at P800 to T824 is disordered. The span at P802 to Q816 shows a compositional bias: polar residues.

It belongs to the peptidase S16 family. In terms of assembly, homohexamer. Organized in a ring with a central cavity.

It is found in the cytoplasm. The enzyme catalyses Hydrolysis of proteins in presence of ATP.. Functionally, ATP-dependent serine protease that mediates the selective degradation of mutant and abnormal proteins as well as certain short-lived regulatory proteins. Required for cellular homeostasis and for survival from DNA damage and developmental changes induced by stress. Degrades polypeptides processively to yield small peptide fragments that are 5 to 10 amino acids long. Binds to DNA in a double-stranded, site-specific manner. The sequence is that of Lon protease from Chloroflexus aggregans (strain MD-66 / DSM 9485).